The chain runs to 283 residues: ATP phosphoribosyltransferase (283 aa).

Belongs to the ATP phosphoribosyltransferase family. Long subfamily. Mg(2+) serves as cofactor.

Its subcellular location is the cytoplasm. It carries out the reaction 1-(5-phospho-beta-D-ribosyl)-ATP + diphosphate = 5-phospho-alpha-D-ribose 1-diphosphate + ATP. It functions in the pathway amino-acid biosynthesis; L-histidine biosynthesis; L-histidine from 5-phospho-alpha-D-ribose 1-diphosphate: step 1/9. Its activity is regulated as follows. Feedback inhibited by histidine. Functionally, catalyzes the condensation of ATP and 5-phosphoribose 1-diphosphate to form N'-(5'-phosphoribosyl)-ATP (PR-ATP). Has a crucial role in the pathway because the rate of histidine biosynthesis seems to be controlled primarily by regulation of HisG enzymatic activity. The sequence is that of ATP phosphoribosyltransferase from Bacteroides fragilis (strain ATCC 25285 / DSM 2151 / CCUG 4856 / JCM 11019 / LMG 10263 / NCTC 9343 / Onslow / VPI 2553 / EN-2).